A 117-amino-acid polypeptide reads, in one-letter code: Crustacean hyperglycemic hormones 3 (117 aa).

The first 24 residues, 1–24, serve as a signal peptide directing secretion; the sequence is MVTPRMLSALSAVLLLVLTASSSA. 3 disulfides stabilise this stretch: Cys50–Cys86, Cys66–Cys82, and Cys69–Cys95. Position 115 is a valine amide (Val115).

The protein belongs to the arthropod CHH/MIH/GIH/VIH hormone family. As to expression, produced by the medulla terminalis X-organ in the eyestalks and transported to the sinus gland where they are stored and released.

It localises to the secreted. Its function is as follows. Hormone found in the sinus gland of isopods and decapods which controls the blood sugar level. Has a secretagogue action over the amylase released from the midgut gland. May act as a stress hormone and may be involved in the control of molting and reproduction. This Penaeus japonicus (Kuruma prawn) protein is Crustacean hyperglycemic hormones 3.